Reading from the N-terminus, the 317-residue chain is Beta-ketoacyl-[acyl-carrier-protein] synthase III (317 aa).

Active-site residues include cysteine 112 and histidine 244. Positions 245 to 249 (QANVR) are ACP-binding. The active site involves asparagine 274.

The protein belongs to the thiolase-like superfamily. FabH family. As to quaternary structure, homodimer.

It localises to the cytoplasm. It catalyses the reaction malonyl-[ACP] + acetyl-CoA + H(+) = 3-oxobutanoyl-[ACP] + CO2 + CoA. It functions in the pathway lipid metabolism; fatty acid biosynthesis. Functionally, catalyzes the condensation reaction of fatty acid synthesis by the addition to an acyl acceptor of two carbons from malonyl-ACP. Catalyzes the first condensation reaction which initiates fatty acid synthesis and may therefore play a role in governing the total rate of fatty acid production. Possesses both acetoacetyl-ACP synthase and acetyl transacylase activities. Its substrate specificity determines the biosynthesis of branched-chain and/or straight-chain of fatty acids. In Rickettsia bellii (strain OSU 85-389), this protein is Beta-ketoacyl-[acyl-carrier-protein] synthase III.